Consider the following 185-residue polypeptide: UPF0200 protein TON_1344 (185 aa).

Position 7–14 (7–14 (GMPGSGKS)) interacts with ATP.

It belongs to the UPF0200 family.

The protein is UPF0200 protein TON_1344 of Thermococcus onnurineus (strain NA1).